Here is a 389-residue protein sequence, read N- to C-terminus: Phosphopentomutase (389 aa).

Residues D12, D284, H289, D325, H326, and H337 each contribute to the Mn(2+) site.

The protein belongs to the phosphopentomutase family. The cofactor is Mn(2+).

The protein localises to the cytoplasm. The enzyme catalyses 2-deoxy-alpha-D-ribose 1-phosphate = 2-deoxy-D-ribose 5-phosphate. It carries out the reaction alpha-D-ribose 1-phosphate = D-ribose 5-phosphate. Its pathway is carbohydrate degradation; 2-deoxy-D-ribose 1-phosphate degradation; D-glyceraldehyde 3-phosphate and acetaldehyde from 2-deoxy-alpha-D-ribose 1-phosphate: step 1/2. Its function is as follows. Isomerase that catalyzes the conversion of deoxy-ribose 1-phosphate (dRib-1-P) and ribose 1-phosphate (Rib-1-P) to deoxy-ribose 5-phosphate (dRib-5-P) and ribose 5-phosphate (Rib-5-P), respectively. In Anaeromyxobacter sp. (strain Fw109-5), this protein is Phosphopentomutase.